The chain runs to 383 residues: tRNA-specific 2-thiouridylase MnmA (383 aa).

ATP-binding positions include 9-16 (GMSGGVDS) and methionine 35. Residues 95–97 (NPD) are interaction with target base in tRNA. The active-site Nucleophile is the cysteine 100. A disulfide bridge links cysteine 100 with cysteine 196. Glycine 124 is an ATP binding site. The interval 146–148 (KDQ) is interaction with tRNA. Cysteine 196 functions as the Cysteine persulfide intermediate in the catalytic mechanism. Residues 308–309 (RY) form an interaction with tRNA region.

This sequence belongs to the MnmA/TRMU family.

Its subcellular location is the cytoplasm. It carries out the reaction S-sulfanyl-L-cysteinyl-[protein] + uridine(34) in tRNA + AH2 + ATP = 2-thiouridine(34) in tRNA + L-cysteinyl-[protein] + A + AMP + diphosphate + H(+). Catalyzes the 2-thiolation of uridine at the wobble position (U34) of tRNA, leading to the formation of s(2)U34. In Burkholderia lata (strain ATCC 17760 / DSM 23089 / LMG 22485 / NCIMB 9086 / R18194 / 383), this protein is tRNA-specific 2-thiouridylase MnmA.